A 364-amino-acid polypeptide reads, in one-letter code: Probable protein disulfide-isomerase A6 (364 aa).

Residues 1-28 form the signal peptide; the sequence is MKMEMHQIWSRIALASFAFAILFVSVSA. Thioredoxin domains follow at residues 29–137 and 139–256; these read DDVV…TEGG and NVKI…EKSG. Residues cysteine 58, cysteine 61, cysteine 177, and cysteine 180 each act as nucleophile in the active site. Intrachain disulfides connect cysteine 58/cysteine 61 and cysteine 177/cysteine 180.

Belongs to the protein disulfide isomerase family.

It is found in the endoplasmic reticulum lumen. It carries out the reaction Catalyzes the rearrangement of -S-S- bonds in proteins.. The sequence is that of Probable protein disulfide-isomerase A6 from Medicago sativa (Alfalfa).